Consider the following 130-residue polypeptide: Small ribosomal subunit protein uS9 (130 aa).

Belongs to the universal ribosomal protein uS9 family.

In Nitrosomonas eutropha (strain DSM 101675 / C91 / Nm57), this protein is Small ribosomal subunit protein uS9.